Consider the following 608-residue polypeptide: Chaperone protein DnaK (608 aa).

Threonine 175 bears the Phosphothreonine; by autocatalysis mark.

This sequence belongs to the heat shock protein 70 family.

Functionally, acts as a chaperone. This is Chaperone protein DnaK from Finegoldia magna (strain ATCC 29328 / DSM 20472 / WAL 2508) (Peptostreptococcus magnus).